The sequence spans 229 residues: Phosphatidylinositol N-acetylglucosaminyltransferase subunit GPI15 (229 aa).

Transmembrane regions (helical) follow at residues 59–79 and 101–121; these read IQYHQIVLILLLNILFYVICL and ILIIMGLFALGTIILVRGPSV.

This sequence belongs to the PIGH family. Component of the phosphatidylinositol N-acetylglucosaminyltransferase (GPI-GlcNAc transferase) complex composed of at least GPI1, GPI2, GPI3, GPI15, GPI19 and ERI1.

It localises to the membrane. The enzyme catalyses a 1,2-diacyl-sn-glycero-3-phospho-(1D-myo-inositol) + UDP-N-acetyl-alpha-D-glucosamine = a 6-(N-acetyl-alpha-D-glucosaminyl)-1-(1,2-diacyl-sn-glycero-3-phospho)-1D-myo-inositol + UDP + H(+). It functions in the pathway glycolipid biosynthesis; glycosylphosphatidylinositol-anchor biosynthesis. In terms of biological role, part of the complex catalyzing the transfer of N-acetylglucosamine from UDP-N-acetylglucosamine to phosphatidylinositol, the first step of GPI biosynthesis. The chain is Phosphatidylinositol N-acetylglucosaminyltransferase subunit GPI15 (GPI15) from Saccharomyces cerevisiae (strain ATCC 204508 / S288c) (Baker's yeast).